Consider the following 428-residue polypeptide: Flap endonuclease 1-B (428 aa).

Positions 1 to 132 (MGIKGLTKVL…KELAKRSLKR (132 aa)) are N-domain. D34 contributes to the Mg(2+) binding site. DNA is bound at residue R98. Mg(2+) is bound by residues D114, E186, E188, D207, and D209. The tract at residues 150 to 281 (AVEKFSKRTV…QRALKLIRQH (132 aa)) is I-domain. E186 contributes to the DNA binding site. Positions 259 and 261 each coordinate DNA. D261 contributes to the Mg(2+) binding site.

The protein belongs to the XPG/RAD2 endonuclease family. FEN1 subfamily. Interacts with PCNA. Three molecules of FEN1 bind to one PCNA trimer with each molecule binding to one PCNA monomer. PCNA stimulates the nuclease activity without altering cleavage specificity. It depends on Mg(2+) as a cofactor. Phosphorylated. Phosphorylation upon DNA damage induces relocalization to the nuclear plasma.

The protein localises to the nucleus. Its subcellular location is the nucleolus. The protein resides in the nucleoplasm. It is found in the mitochondrion. Structure-specific nuclease with 5'-flap endonuclease and 5'-3' exonuclease activities involved in DNA replication and repair. During DNA replication, cleaves the 5'-overhanging flap structure that is generated by displacement synthesis when DNA polymerase encounters the 5'-end of a downstream Okazaki fragment. It enters the flap from the 5'-end and then tracks to cleave the flap base, leaving a nick for ligation. Also involved in the long patch base excision repair (LP-BER) pathway, by cleaving within the apurinic/apyrimidinic (AP) site-terminated flap. Acts as a genome stabilization factor that prevents flaps from equilibrating into structures that lead to duplications and deletions. Also possesses 5'-3' exonuclease activity on nicked or gapped double-stranded DNA, and exhibits RNase H activity. Also involved in replication and repair of rDNA and in repairing mitochondrial DNA. The chain is Flap endonuclease 1-B from Sorghum bicolor (Sorghum).